Here is a 402-residue protein sequence, read N- to C-terminus: Argininosuccinate synthase (402 aa).

Residues 10–18 (AYSGGLDTS) and alanine 38 contribute to the ATP site. Tyrosine 90 contacts L-citrulline. Residue glycine 120 participates in ATP binding. The L-aspartate site is built by threonine 122, asparagine 126, and aspartate 127. Residue asparagine 126 participates in L-citrulline binding. Residues arginine 130, serine 179, serine 188, glutamate 264, and tyrosine 276 each coordinate L-citrulline.

It belongs to the argininosuccinate synthase family. Type 1 subfamily. As to quaternary structure, homotetramer.

Its subcellular location is the cytoplasm. The catalysed reaction is L-citrulline + L-aspartate + ATP = 2-(N(omega)-L-arginino)succinate + AMP + diphosphate + H(+). It participates in amino-acid biosynthesis; L-arginine biosynthesis; L-arginine from L-ornithine and carbamoyl phosphate: step 2/3. In Psychromonas ingrahamii (strain DSM 17664 / CCUG 51855 / 37), this protein is Argininosuccinate synthase.